Here is a 160-residue protein sequence, read N- to C-terminus: Ribosome maturation factor RimP (160 aa).

The protein belongs to the RimP family.

The protein resides in the cytoplasm. Functionally, required for maturation of 30S ribosomal subunits. The chain is Ribosome maturation factor RimP from Orientia tsutsugamushi (strain Ikeda) (Rickettsia tsutsugamushi).